The primary structure comprises 483 residues: Probable zinc metalloprotease PTT_08196 (483 aa).

The signal sequence occupies residues 1–18 (MLFRSVILSNALLLPACA). N-linked (GlcNAc...) asparagine glycans are attached at residues Asn96 and Asn121. Zn(2+) is bound by residues His167, Asp187, and Glu220. N-linked (GlcNAc...) asparagine glycosylation occurs at Asn235. Residue Asp247 participates in Zn(2+) binding. Residues Asn310, Asn362, Asn401, Asn411, and Asn421 are each glycosylated (N-linked (GlcNAc...) asparagine). The Fibronectin type-III domain maps to 396–483 (PAMPRNVTID…KSPAVYPFPA (88 aa)).

Belongs to the peptidase M28 family. M28B subfamily. Zn(2+) serves as cofactor.

It localises to the secreted. The polypeptide is Probable zinc metalloprotease PTT_08196 (Pyrenophora teres f. teres (strain 0-1) (Barley net blotch fungus)).